The chain runs to 454 residues: Bifunctional protein GlmU (454 aa).

The segment at 1 to 228 (MTLPLHVVIL…PQHVEGANDP (228 aa)) is pyrophosphorylase. UDP-N-acetyl-alpha-D-glucosamine contacts are provided by residues 10-13 (LAAG), K24, Q76, 81-82 (GT), 103-105 (YGD), G138, E153, N168, and N226. D105 provides a ligand contact to Mg(2+). N226 contributes to the Mg(2+) binding site. The interval 229–249 (WQLAQLERAWQLRAARTLCLQ) is linker. The tract at residues 250–454 (GVRMADPARV…IEGWKRPTKK (205 aa)) is N-acetyltransferase. Residues R332 and K350 each coordinate UDP-N-acetyl-alpha-D-glucosamine. H362 functions as the Proton acceptor in the catalytic mechanism. 2 residues coordinate UDP-N-acetyl-alpha-D-glucosamine: Y365 and N376. Residues A379, 385-386 (NY), S404, A422, and R439 contribute to the acetyl-CoA site.

In the N-terminal section; belongs to the N-acetylglucosamine-1-phosphate uridyltransferase family. It in the C-terminal section; belongs to the transferase hexapeptide repeat family. In terms of assembly, homotrimer. It depends on Mg(2+) as a cofactor.

It localises to the cytoplasm. The enzyme catalyses alpha-D-glucosamine 1-phosphate + acetyl-CoA = N-acetyl-alpha-D-glucosamine 1-phosphate + CoA + H(+). It carries out the reaction N-acetyl-alpha-D-glucosamine 1-phosphate + UTP + H(+) = UDP-N-acetyl-alpha-D-glucosamine + diphosphate. The protein operates within nucleotide-sugar biosynthesis; UDP-N-acetyl-alpha-D-glucosamine biosynthesis; N-acetyl-alpha-D-glucosamine 1-phosphate from alpha-D-glucosamine 6-phosphate (route II): step 2/2. It participates in nucleotide-sugar biosynthesis; UDP-N-acetyl-alpha-D-glucosamine biosynthesis; UDP-N-acetyl-alpha-D-glucosamine from N-acetyl-alpha-D-glucosamine 1-phosphate: step 1/1. It functions in the pathway bacterial outer membrane biogenesis; LPS lipid A biosynthesis. Functionally, catalyzes the last two sequential reactions in the de novo biosynthetic pathway for UDP-N-acetylglucosamine (UDP-GlcNAc). The C-terminal domain catalyzes the transfer of acetyl group from acetyl coenzyme A to glucosamine-1-phosphate (GlcN-1-P) to produce N-acetylglucosamine-1-phosphate (GlcNAc-1-P), which is converted into UDP-GlcNAc by the transfer of uridine 5-monophosphate (from uridine 5-triphosphate), a reaction catalyzed by the N-terminal domain. In Xanthomonas euvesicatoria pv. vesicatoria (strain 85-10) (Xanthomonas campestris pv. vesicatoria), this protein is Bifunctional protein GlmU.